Reading from the N-terminus, the 107-residue chain is Large ribosomal subunit protein uL24 (107 aa).

Belongs to the universal ribosomal protein uL24 family. As to quaternary structure, part of the 50S ribosomal subunit.

Functionally, one of two assembly initiator proteins, it binds directly to the 5'-end of the 23S rRNA, where it nucleates assembly of the 50S subunit. In terms of biological role, one of the proteins that surrounds the polypeptide exit tunnel on the outside of the subunit. In Natranaerobius thermophilus (strain ATCC BAA-1301 / DSM 18059 / JW/NM-WN-LF), this protein is Large ribosomal subunit protein uL24.